The chain runs to 956 residues: Glycine dehydrogenase (decarboxylating) (956 aa).

An N6-(pyridoxal phosphate)lysine modification is found at Lys697.

The protein belongs to the GcvP family. In terms of assembly, the glycine cleavage system is composed of four proteins: P, T, L and H. Pyridoxal 5'-phosphate serves as cofactor.

It carries out the reaction N(6)-[(R)-lipoyl]-L-lysyl-[glycine-cleavage complex H protein] + glycine + H(+) = N(6)-[(R)-S(8)-aminomethyldihydrolipoyl]-L-lysyl-[glycine-cleavage complex H protein] + CO2. Its function is as follows. The glycine cleavage system catalyzes the degradation of glycine. The P protein binds the alpha-amino group of glycine through its pyridoxal phosphate cofactor; CO(2) is released and the remaining methylamine moiety is then transferred to the lipoamide cofactor of the H protein. The sequence is that of Glycine dehydrogenase (decarboxylating) from Cereibacter sphaeroides (strain KD131 / KCTC 12085) (Rhodobacter sphaeroides).